Consider the following 400-residue polypeptide: tRNA(Met) cytidine acetate ligase (400 aa).

ATP contacts are provided by residues 7–20 (IVEY…HQYH), G101, N162, and R187.

It belongs to the TmcAL family.

The protein localises to the cytoplasm. It carries out the reaction cytidine(34) in elongator tRNA(Met) + acetate + ATP = N(4)-acetylcytidine(34) in elongator tRNA(Met) + AMP + diphosphate. In terms of biological role, catalyzes the formation of N(4)-acetylcytidine (ac(4)C) at the wobble position of elongator tRNA(Met), using acetate and ATP as substrates. First activates an acetate ion to form acetyladenylate (Ac-AMP) and then transfers the acetyl group to tRNA to form ac(4)C34. The polypeptide is tRNA(Met) cytidine acetate ligase (Oceanobacillus iheyensis (strain DSM 14371 / CIP 107618 / JCM 11309 / KCTC 3954 / HTE831)).